Here is a 1802-residue protein sequence, read N- to C-terminus: Non-reducing polyketide synthase nscA (1802 aa).

The N-terminal acylcarrier protein transacylase domain (SAT) stretch occupies residues 27–261 (DLFRRLDQHS…PLPVYDGLCH (235 aa)). A Ketosynthase family 3 (KS3) domain is found at 396 to 829 (SSKLAIVGMA…GGNTTLLLED (434 aa)). Residues Cys-569, His-704, and His-747 each act as for beta-ketoacyl synthase activity in the active site. Positions 935 to 1235 (FTGQGAYYHG…SASAIPSCRR (301 aa)) are malonyl-CoA:ACP transacylase (MAT) domain. A product template (PT) domain region spans residues 1322-1641 (TSLVHQITAE…RLLMDRFFSP (320 aa)). The segment at 1326-1462 (HQITAETVEA…ATIRFEDPEA (137 aa)) is N-terminal hotdog fold. One can recognise a PKS/mFAS DH domain in the interval 1326-1636 (HQITAETVEA…FRRVPRLLMD (311 aa)). The active-site Proton acceptor; for dehydratase activity is the His-1358. The C-terminal hotdog fold stretch occupies residues 1490–1636 (ASRLSKPLAY…FRRVPRLLMD (147 aa)). The active-site Proton donor; for dehydratase activity is the Asp-1547. The segment at 1699 to 1729 (LLATSSKSSTPKESPIVTPAESERAEPVDNS) is disordered. Low complexity predominate over residues 1702-1713 (TSSKSSTPKESP). One can recognise a Carrier domain in the interval 1725-1802 (PVDNSMTSQC…EMTAWIEEYC (78 aa)). O-(pantetheine 4'-phosphoryl)serine is present on Ser-1762.

It depends on pantetheine 4'-phosphate as a cofactor.

It functions in the pathway secondary metabolite biosynthesis. Non-reducing polyketide synthase; part of the gene cluster that mediates the biosynthesis of neosartoricin B, a prenylated anthracenone that probably exhibits T-cell antiproliferative activity, suggestive of a physiological role as an immunosuppressive agent. The non-reducing polyketide synthase nscA probably synthesizes and cyclizes the decaketide backbone. The hydrolase nscB then mediates the product release through hydrolysis followed by spontaneous decarboxylation. The prenyltransferase nscD catalyzes the addition of the dimethylallyl group to the aromatic C5. The FAD-dependent monooxygenase nscC is then responsible for the stereospecific hydroxylation at C2. Neosartoricin B can be converted into two additional compounds neosartoricins C and D. Neosartoricin C is a spirocyclic compound that is cyclized through the attack of C3 hydroxyl on C14, followed by dehydration. On the other hand, neosartoricin D is a further cyclized compound in which attack of C2 on C14 in neosartoricin C results in the formation of the acetal-containing dioxabicyclo-octanone ring. Both of these compounds are novel and possibly represent related metabolites of the gene cluster. The polypeptide is Non-reducing polyketide synthase nscA (Trichophyton tonsurans (strain CBS 112818) (Scalp ringworm fungus)).